The following is a 480-amino-acid chain: Glutamyl-tRNA(Gln) amidotransferase subunit A (480 aa).

Active-site charge relay system residues include K70 and S145. S169 functions as the Acyl-ester intermediate in the catalytic mechanism.

It belongs to the amidase family. GatA subfamily. In terms of assembly, heterotrimer of A, B and C subunits.

It catalyses the reaction L-glutamyl-tRNA(Gln) + L-glutamine + ATP + H2O = L-glutaminyl-tRNA(Gln) + L-glutamate + ADP + phosphate + H(+). In terms of biological role, allows the formation of correctly charged Gln-tRNA(Gln) through the transamidation of misacylated Glu-tRNA(Gln) in organisms which lack glutaminyl-tRNA synthetase. The reaction takes place in the presence of glutamine and ATP through an activated gamma-phospho-Glu-tRNA(Gln). In Lactobacillus delbrueckii subsp. bulgaricus (strain ATCC 11842 / DSM 20081 / BCRC 10696 / JCM 1002 / NBRC 13953 / NCIMB 11778 / NCTC 12712 / WDCM 00102 / Lb 14), this protein is Glutamyl-tRNA(Gln) amidotransferase subunit A.